A 182-amino-acid chain; its full sequence is PTS system glucitol/sorbitol-specific EIIC component (182 aa).

The PTS EIIC type-5 domain maps to 1–182 (MDAIVYFAKG…IELSNQLKAN (182 aa)). 3 helical membrane passes run 28–48 (GIIP…AFIG), 63–83 (VILA…NPMA), and 139–159 (TALG…AGWV).

It localises to the cell membrane. The phosphoenolpyruvate-dependent sugar phosphotransferase system (PTS), a major carbohydrate active transport system, catalyzes the phosphorylation of incoming sugar substrates concomitant with their translocation across the cell membrane. The enzyme II complex composed of SrlA, SrlB and SrlE is involved in glucitol/sorbitol transport. The sequence is that of PTS system glucitol/sorbitol-specific EIIC component (srlA) from Clostridium beijerinckii (strain ATCC 51743 / NCIMB 8052) (Clostridium acetobutylicum).